The chain runs to 525 residues: Chromosomal replication initiator protein DnaA (525 aa).

Positions 1 to 71 (MNDFWQHCSA…SDLAREFWNT (71 aa)) are domain I, interacts with DnaA modulators. The segment at 71–188 (TPIEVQFVLD…GEADSMYERS (118 aa)) is domain II. Residues 160 to 182 (AAAGRRTWRPGPGAAPANGGEAD) form a disordered region. The segment covering 169-181 (PGPGAAPANGGEA) has biased composition (low complexity). The tract at residues 189-405 (KLNPVLTFDN…GALRKILAYS (217 aa)) is domain III, AAA+ region. ATP is bound by residues G233, G235, K236, and T237. The segment at 406–525 (KFHGREISIE…LHVLEQTLKG (120 aa)) is domain IV, binds dsDNA.

Belongs to the DnaA family. In terms of assembly, oligomerizes as a right-handed, spiral filament on DNA at oriC.

It is found in the cytoplasm. Plays an essential role in the initiation and regulation of chromosomal replication. ATP-DnaA binds to the origin of replication (oriC) to initiate formation of the DNA replication initiation complex once per cell cycle. Binds the DnaA box (a 9 base pair repeat at the origin) and separates the double-stranded (ds)DNA. Forms a right-handed helical filament on oriC DNA; dsDNA binds to the exterior of the filament while single-stranded (ss)DNA is stabiized in the filament's interior. The ATP-DnaA-oriC complex binds and stabilizes one strand of the AT-rich DNA unwinding element (DUE), permitting loading of DNA polymerase. After initiation quickly degrades to an ADP-DnaA complex that is not apt for DNA replication. Binds acidic phospholipids. The polypeptide is Chromosomal replication initiator protein DnaA (Burkholderia orbicola (strain MC0-3)).